We begin with the raw amino-acid sequence, 426 residues long: Glutamate-1-semialdehyde 2,1-aminomutase (426 aa).

The residue at position 265 (Lys265) is an N6-(pyridoxal phosphate)lysine.

Belongs to the class-III pyridoxal-phosphate-dependent aminotransferase family. HemL subfamily. In terms of assembly, homodimer. Pyridoxal 5'-phosphate serves as cofactor.

Its subcellular location is the cytoplasm. It carries out the reaction (S)-4-amino-5-oxopentanoate = 5-aminolevulinate. Its pathway is porphyrin-containing compound metabolism; protoporphyrin-IX biosynthesis; 5-aminolevulinate from L-glutamyl-tRNA(Glu): step 2/2. This is Glutamate-1-semialdehyde 2,1-aminomutase from Salmonella newport (strain SL254).